Reading from the N-terminus, the 159-residue chain is Phosphopantetheine adenylyltransferase (159 aa).

Residue S9 coordinates substrate. ATP contacts are provided by residues 9–10 (SF) and H17. 3 residues coordinate substrate: K41, I75, and K89. Residues 90-92 (GLR), E100, and 124-130 (LEHISSS) contribute to the ATP site.

It belongs to the bacterial CoaD family. As to quaternary structure, homohexamer. Requires Mg(2+) as cofactor.

It is found in the cytoplasm. It catalyses the reaction (R)-4'-phosphopantetheine + ATP + H(+) = 3'-dephospho-CoA + diphosphate. Its pathway is cofactor biosynthesis; coenzyme A biosynthesis; CoA from (R)-pantothenate: step 4/5. Its function is as follows. Reversibly transfers an adenylyl group from ATP to 4'-phosphopantetheine, yielding dephospho-CoA (dPCoA) and pyrophosphate. The chain is Phosphopantetheine adenylyltransferase from Bifidobacterium animalis subsp. lactis (strain AD011).